We begin with the raw amino-acid sequence, 21 residues long: Alpha-fibrinogenase A1 (21 aa).

It belongs to the peptidase S1 family. Snake venom subfamily. In terms of assembly, monomer. As to expression, expressed by the venom gland.

Its subcellular location is the secreted. With respect to regulation, inhibited by PMSF, bovine aprotinin (APR), and soybean trypsin inhibitor (STI). Is not inhibited by EDTA, beta-mercaptoethanol, and high temperature (85 degrees Celsius). In terms of biological role, snake venom serine protease that completely cleaves fibrinogen Aalpha chain (FGA), partially cleaves Bbeta chain (FGB) and has no activity on gamma chain. Is more potent that A2 and A3 alpha-fibrinogenases. Very active within 5 minutes. The polypeptide is Alpha-fibrinogenase A1 (Crotalus atrox (Western diamondback rattlesnake)).